Here is a 503-residue protein sequence, read N- to C-terminus: GMP synthase [glutamine-hydrolyzing] (503 aa).

Residues 3-189 form the Glutamine amidotransferase type-1 domain; the sequence is PVLVVDFGSQ…AFLSSFAAPN (187 aa). The active-site Nucleophile is the Cys80. Active-site residues include His165 and Glu167. The region spanning 190-380 is the GMPS ATP-PPase domain; sequence WDPEQTICGT…LGIPKHIVHR (191 aa). Residue 217-223 participates in ATP binding; the sequence is SGGVDSV.

Homodimer.

It carries out the reaction XMP + L-glutamine + ATP + H2O = GMP + L-glutamate + AMP + diphosphate + 2 H(+). It participates in purine metabolism; GMP biosynthesis; GMP from XMP (L-Gln route): step 1/1. Functionally, catalyzes the synthesis of GMP from XMP. The polypeptide is GMP synthase [glutamine-hydrolyzing] (Tropheryma whipplei (strain TW08/27) (Whipple's bacillus)).